The sequence spans 215 residues: Pyrrolidone-carboxylate peptidase (215 aa).

Catalysis depends on residues E80, C143, and H167.

This sequence belongs to the peptidase C15 family. Homotetramer.

Its subcellular location is the cytoplasm. The catalysed reaction is Release of an N-terminal pyroglutamyl group from a polypeptide, the second amino acid generally not being Pro.. Its function is as follows. Removes 5-oxoproline from various penultimate amino acid residues except L-proline. In Bacillus cereus (strain ATCC 14579 / DSM 31 / CCUG 7414 / JCM 2152 / NBRC 15305 / NCIMB 9373 / NCTC 2599 / NRRL B-3711), this protein is Pyrrolidone-carboxylate peptidase.